We begin with the raw amino-acid sequence, 442 residues long: Plasmalemma vesicle-associated protein (442 aa).

Residues 1 to 27 lie on the Cytoplasmic side of the membrane; that stretch reads MGLAMEHGGSYARAGGSSRGCWYYLRY. The helical; Signal-anchor for type II membrane protein transmembrane segment at 28–48 threads the bilayer; it reads FFLFVSLIQFLIILGLVLFMV. Residues 49–442 lie on the Extracellular side of the membrane; that stretch reads YGNVHVSTES…AGIPVAPSSG (394 aa). The stretch at 57–77 forms a coiled coil; it reads ESNLQATERRAEGLYSQLLGL. Asn83, Asn89, Asn113, and Asn151 each carry an N-linked (GlcNAc...) asparagine glycan. 2 coiled-coil regions span residues 202–225 and 280–387; these read KTRE…QALC and SSKV…SALD. Disordered regions lie at residues 301–328 and 394–418; these read NSDL…VEKE and SQPM…PASL. Residues 319-328 are compositionally biased toward basic and acidic residues; the sequence is QEAKQKVEKE.

As to quaternary structure, homodimer. Expressed in lung, kidney, heart, aorta, placenta, muscle, pituitary gland, adrenals, mammary gland, bladder, lymph node, bone marrow, trachea, digestive tract, liver and tumor-associated endothelium.

The protein localises to the cell membrane. It localises to the membrane. The protein resides in the caveola. It is found in the cytoplasm. Its subcellular location is the perinuclear region. In terms of biological role, endothelial cell-specific membrane protein involved in the formation of the diaphragms that bridge endothelial fenestrae. It is also required for the formation of stomata of caveolae and transendothelial channels. Functions in microvascular permeability, endothelial fenestrae contributing to the passage of water and solutes and regulating transcellular versus paracellular flow in different organs. Plays a specific role in embryonic development. The polypeptide is Plasmalemma vesicle-associated protein (PLVAP) (Homo sapiens (Human)).